We begin with the raw amino-acid sequence, 456 residues long: Major facilitator superfamily domain-containing protein 10 (456 aa).

11 helical membrane-spanning segments follow: residues 25–45, 87–107, 125–145, 149–169, 179–199, 204–224, 278–298, 311–328, 343–363, 365–385, and 422–442; these read VVAVVFLGLLLDLLAFTLLLP, VLFGGLIGSVFSLLQFLSAPL, LAGVATSYAVWAASKSFAAFL, VIGGISKGNVSLCTAIVADLG, AVIGVAFSLGFTLGPTLGAFL, VPWLALLFAVSDLLFIWCFLP, LVYFLYLFLFSGLEFTLSFLV, KMFFFIGLTMATIQGAYA, AILLLIPASLFVGWGHTLPIL, LGLLLYSWAAAVVVPCLSSVV, and LAGARVCYTVCAALFLLPFSI.

This sequence belongs to the major facilitator superfamily.

The protein localises to the nucleus inner membrane. It is found in the cell membrane. Probable organic anion transporter which may serve as a transporter for some non-steroidal anti-inflammatory drugs (NSAIDs) as well as other organic anions across the luminal membranes of renal proximal tubules at the final excretion step into the urine. The polypeptide is Major facilitator superfamily domain-containing protein 10 (MFSD10) (Bos taurus (Bovine)).